A 1349-amino-acid chain; its full sequence is Indole-3-acetaldehyde oxidase (1349 aa).

The 2Fe-2S ferredoxin-type domain maps to 7-94 (AAVVLAVNGK…RCSVTTSEGI (88 aa)). Positions 46, 51, and 54 each coordinate [2Fe-2S] cluster. The FAD-binding PCMH-type domain occupies 237–415 (VPVSDDGWYR…LSIFIPEWGS (179 aa)).

It belongs to the xanthine dehydrogenase family. Aldehyde oxidases (AO) are homodimers and heterodimers of AO subunits. [2Fe-2S] cluster is required as a cofactor. Requires FAD as cofactor. It depends on Mo-molybdopterin as a cofactor. In terms of tissue distribution, mostly expressed in coleoptiles, and, to a lower extent, in mesocotyl and roots.

The protein resides in the cytoplasm. It carries out the reaction indole-3-acetaldehyde + O2 + H2O = (indol-3-yl)acetate + H2O2 + H(+). Its function is as follows. In higher plants aldehyde oxidases (AO) appear to be homo- and heterodimeric assemblies of AO subunits with probably different physiological functions. Involved in the biosynthesis of auxin. The polypeptide is Indole-3-acetaldehyde oxidase (AO2) (Zea mays (Maize)).